A 388-amino-acid polypeptide reads, in one-letter code: Mannitol-1-phosphate 5-dehydrogenase (388 aa).

An NAD(+)-binding site is contributed by 5–16 (AVHFGGGNIGRG). Residue lysine 213 is part of the active site.

It belongs to the mannitol dehydrogenase family. Monomer.

The enzyme catalyses D-mannitol 1-phosphate + NAD(+) = beta-D-fructose 6-phosphate + NADH + H(+). In terms of biological role, catalyzes the NAD(H)-dependent interconversion of D-fructose 6-phosphate and D-mannitol 1-phosphate in the mannitol metabolic pathway. The chain is Mannitol-1-phosphate 5-dehydrogenase from Coccidioides immitis (strain RS) (Valley fever fungus).